The following is a 551-amino-acid chain: MEKIVLLFAIVSLVKSDQICIGYHANNSTEQVDTIMEKNVTVTHAQDILEKTHNGKLCDLDGVKPLILRDCSVAGWLLGNPMCDEFINVPEWSYIVEKANPANDLCYPGDFNDYEELKHLLSRINHFEKIQIIPKNSWSSHEASLGVSSACPYQGKSSFFRNVVWLIKKNNAYPTIKRSYNNTNQEDLLVLWGIHHPNDAAEQTRLYQNPTTYISVGTSTLNQRLVPKIATRSKVNGQNGRMEFFWTILKPNDAINFESNGNFIAPEYAYKIVKKGDSAIMKSELEYGNCNTKCQTPMGAINSSMPFHNIHPLTIGECPKYVKSNRLVLATGLRNSPQRERRRKKRGLFGAIAGFIEGGWQGMVDGWYGYHHSNEQGSGYAADKESTQKAIDGVTNKVNSIIDKMNTQFEAVGREFNNLERRIENLNKKMEDGFLDVWTYNAELLVLMENERTLDFHDSNVKNLYDKVRLQLRDNAKELGNGCFEFYHKCDNECMESVRNGTYDYPQYSEEARLKREEISGVKLESIGTYQILSIYSTVASSLALAIMVAG.

Positions 1 to 16 (MEKIVLLFAIVSLVKS) are cleaved as a signal peptide. Over 17 to 530 (DQICIGYHAN…GVKLESIGTY (514 aa)) the chain is Extracellular. 6 disulfides stabilise this stretch: Cys20-Cys483, Cys58-Cys290, Cys71-Cys83, Cys106-Cys151, Cys294-Cys318, and Cys490-Cys494. Residues Asn26, Asn27, and Asn39 are each glycosylated (N-linked (GlcNAc...) asparagine; by host). Asn181 and Asn302 each carry an N-linked (GlcNAc...) asparagine; by host glycan. Asn500 is a glycosylation site (N-linked (GlcNAc...) asparagine; by host). Residues 531-551 (QILSIYSTVASSLALAIMVAG) form a helical membrane-spanning segment.

It belongs to the influenza viruses hemagglutinin family. As to quaternary structure, homotrimer of disulfide-linked HA1-HA2. Palmitoylated. Post-translationally, in natural infection, inactive HA is matured into HA1 and HA2 outside the cell by one or more trypsin-like, arginine-specific endoprotease secreted by the bronchial epithelial cells. One identified protease that may be involved in this process is secreted in lungs by club cells.

Its subcellular location is the virion membrane. The protein localises to the host apical cell membrane. Functionally, binds to sialic acid-containing receptors on the cell surface, bringing about the attachment of the virus particle to the cell. This attachment induces virion internalization either through clathrin-dependent endocytosis or through clathrin- and caveolin-independent pathway. Plays a major role in the determination of host range restriction and virulence. Class I viral fusion protein. Responsible for penetration of the virus into the cell cytoplasm by mediating the fusion of the membrane of the endocytosed virus particle with the endosomal membrane. Low pH in endosomes induces an irreversible conformational change in HA2, releasing the fusion hydrophobic peptide. Several trimers are required to form a competent fusion pore. The sequence is that of Hemagglutinin from Influenza A virus (strain A/Hong Kong/212/2003 H5N1 genotype Z+).